A 262-amino-acid polypeptide reads, in one-letter code: RNA-binding protein 7 (262 aa).

G2 carries the post-translational modification N-acetylglycine. In terms of domain architecture, RRM spans 10–87; that stretch reads RTLFVGNLET…RPIKIQFRAG (78 aa). ZCCHC8 binding regions lie at residues 25–35 and 59–76; these read LLFELFHQAGP and HEVSVPYAMNLLNGIKLF. The tract at residues 95 to 121 is disordered; that stretch reads VSLSYPQHHVGNSSPTSTSPSRTVDNM. A phosphoserine mark is found at S133 and S134. The residue at position 149 (R149) is an Omega-N-methylarginine. Disordered stretches follow at residues 159-212 and 242-262; these read SPHL…HYSR and SHDYDNRRDSGRNGKWRSSRH. Over residues 165-194 the composition is skewed to polar residues; the sequence is SGFSPSAQSHNHTFNQSSSSQWRQDTPSSQ. S201 carries the post-translational modification Phosphoserine. Residues 242–253 show a composition bias toward basic and acidic residues; that stretch reads SHDYDNRRDSGR.

Component of the nuclear exosome targeting (NEXT) complex composed of MTREX, ZCCHC8, and RBM7 that directs a subset of non-coding short-lived RNAs for exosomal degradation. Interacts with ZCCHC8 and SF3B2/SAP145. Binds to MTREX through ZCCHC8. Interacts with YWHAE and YWHAZ; these interactions are stress-dependent and RBM7 phosphorylation dependent; release RNA from the NEXT complex and may affect RNA targeting to the nuclear RNA exosomome for degradation. Interacts with MEPCE and LARP7, the core subunits of 7SK snRNP; upon genotoxic stress this interaction is enhanced, triggering the release of inactive P-TEFb complex from the core and P-TEFb complex activation. In terms of processing, phosphorylated at Ser-133 by MAPK14/p38-alpha-activated MAPKAPK2/MK2; this phosphorylation is stress-dependent; this phosphorylation decreases its RNA-binding capacity therefore affecting RNA nuclear exosome-mediated degradation. This phosphorylation mediates YWHAE and YWHAZ interactions.

The protein resides in the nucleus. It localises to the nucleoplasm. Functionally, RNA-binding subunit of the trimeric nuclear exosome targeting (NEXT) complex, a complex that functions as an RNA exosome cofactor that directs a subset of non-coding short-lived RNAs for exosomal degradation. NEXT is involved in surveillance and turnover of aberrant transcripts and non-coding RNAs. Binds preferentially polyuridine sequences and associates with newly synthesized RNAs, including pre-mRNAs and short-lived exosome substrates such as promoter upstream transcripts (PROMPTs), enhancer RNAs (eRNAs), and 3'-extended products from small nuclear RNAs (snRNAs). Participates in several biological processes including DNA damage response (DDR) and stress response. During stress response, activation of the p38MAPK-MK2 pathway decreases RBM7-RNA-binding and subsequently the RNA exosome degradation activities, thereby modulating the turnover of non-coding transcriptome. Participates in DNA damage response (DDR), through its interaction with MEPCE and LARP7, the core subunits of 7SK snRNP complex, that release the positive transcription elongation factor b (P-TEFb) complex from the 7SK snRNP. In turn, activation of P-TEFb complex induces the transcription of P-TEFb-dependent DDR genes to promote cell viability. This chain is RNA-binding protein 7, found in Bos taurus (Bovine).